Reading from the N-terminus, the 98-residue chain is U11-barytoxin-Tl1b (98 aa).

An N-terminal signal peptide occupies residues 1–21 (MKTLVLVAVLGLASLYLLSYA). Residues 22–50 (SEVQQLSRDEEEFRALVASFGGLFDTEER) constitute a propeptide that is removed on maturation. Intrachain disulfides connect Cys57/Cys71, Cys64/Cys76, and Cys70/Cys89.

It belongs to the neurotoxin 10 (Hwtx-1) family. 25 (ICK4) subfamily. As to expression, expressed by the venom gland.

The protein resides in the secreted. Its function is as follows. Ion channel inhibitor. The protein is U11-barytoxin-Tl1b of Trittame loki (Brush-footed trapdoor spider).